The following is a 213-amino-acid chain: Thymidylate kinase (213 aa).

10 to 17 is a binding site for ATP; it reads GLEGAGKT.

Belongs to the thymidylate kinase family.

The catalysed reaction is dTMP + ATP = dTDP + ADP. Phosphorylation of dTMP to form dTDP in both de novo and salvage pathways of dTTP synthesis. In Escherichia coli O1:K1 / APEC, this protein is Thymidylate kinase.